The following is a 502-amino-acid chain: Large ribosomal subunit protein uL2m (502 aa).

The segment at Ala-458–Ile-502 is disordered. The span at Asp-463–Thr-473 shows a compositional bias: basic and acidic residues. Gly residues predominate over residues Ala-493 to Ile-502.

The protein belongs to the universal ribosomal protein uL2 family.

The protein resides in the mitochondrion. This is Large ribosomal subunit protein uL2m (RPL2) from Oryza sativa (Rice).